The following is a 110-amino-acid chain: Ribonuclease P protein component 1 (110 aa).

It belongs to the eukaryotic/archaeal RNase P protein component 1 family. In terms of assembly, consists of a catalytic RNA component and at least 4-5 protein subunits.

Its subcellular location is the cytoplasm. It carries out the reaction Endonucleolytic cleavage of RNA, removing 5'-extranucleotides from tRNA precursor.. Its function is as follows. Part of ribonuclease P, a protein complex that generates mature tRNA molecules by cleaving their 5'-ends. This is Ribonuclease P protein component 1 from Aeropyrum pernix (strain ATCC 700893 / DSM 11879 / JCM 9820 / NBRC 100138 / K1).